The following is a 1128-amino-acid chain: DNA-directed RNA polymerase subunit Rpo2 (1128 aa).

DsDNA-binding positions include Lys178, 181–182 (SN), Lys206, 435–439 (RGQPN), and 1027–1032 (RFGEME). 4 residues coordinate Zn(2+): Cys1061, Cys1064, Cys1079, and His1082.

Belongs to the RNA polymerase beta chain family. Part of the 13-subunit RNA polymerase complex. Zn(2+) is required as a cofactor.

It localises to the cytoplasm. It carries out the reaction RNA(n) + a ribonucleoside 5'-triphosphate = RNA(n+1) + diphosphate. Its function is as follows. DNA-dependent RNA polymerase (RNAP) catalyzes the transcription of DNA into RNA using the four ribonucleoside triphosphates as substrates. This subunit is involved in DNA promoter recognition. The polypeptide is DNA-directed RNA polymerase subunit Rpo2 (Saccharolobus shibatae (strain ATCC 51178 / DSM 5389 / JCM 8931 / NBRC 15437 / B12) (Sulfolobus shibatae)).